The following is a 285-amino-acid chain: MSSTWLAPAKINLFLHINNKREDGYHNLQTIFQMLDYYDELKFSITNGGVIKRINGNEDVEQSQDLIVKAAKVLQEYTGTTLGANLSIVKNIPIGGGLGGGSSDAATTLVALNQLWDTKLTQPQLMKLGLNLGADVPVFIFAKSAWAEGIGEILSPIKMPNYYYLVVFINKHTSTKEIFSHYALTMSKPQGKIAKFSELINTHNDCLQAAIALEAEIGVALKHLNTCANHISQVRMSGTGSCVFNEFLTEKDALAAAKKVPKKWMSFVTRAINTSPIHSWAVAKR.

K10 is an active-site residue. Residue 93–103 (PIGGGLGGGSS) coordinates ATP. Residue D135 is part of the active site.

This sequence belongs to the GHMP kinase family. IspE subfamily.

It catalyses the reaction 4-CDP-2-C-methyl-D-erythritol + ATP = 4-CDP-2-C-methyl-D-erythritol 2-phosphate + ADP + H(+). It functions in the pathway isoprenoid biosynthesis; isopentenyl diphosphate biosynthesis via DXP pathway; isopentenyl diphosphate from 1-deoxy-D-xylulose 5-phosphate: step 3/6. Catalyzes the phosphorylation of the position 2 hydroxy group of 4-diphosphocytidyl-2C-methyl-D-erythritol. The chain is 4-diphosphocytidyl-2-C-methyl-D-erythritol kinase from Ruthia magnifica subsp. Calyptogena magnifica.